We begin with the raw amino-acid sequence, 180 residues long: Large ribosomal subunit protein uL5 (180 aa).

Belongs to the universal ribosomal protein uL5 family. In terms of assembly, part of the 50S ribosomal subunit; part of the 5S rRNA/L5/L18/L25 subcomplex. Contacts the 5S rRNA and the P site tRNA. Forms a bridge to the 30S subunit in the 70S ribosome.

Functionally, this is one of the proteins that bind and probably mediate the attachment of the 5S RNA into the large ribosomal subunit, where it forms part of the central protuberance. In the 70S ribosome it contacts protein S13 of the 30S subunit (bridge B1b), connecting the 2 subunits; this bridge is implicated in subunit movement. Contacts the P site tRNA; the 5S rRNA and some of its associated proteins might help stabilize positioning of ribosome-bound tRNAs. This Mesoplasma florum (strain ATCC 33453 / NBRC 100688 / NCTC 11704 / L1) (Acholeplasma florum) protein is Large ribosomal subunit protein uL5.